We begin with the raw amino-acid sequence, 459 residues long: MLREYKTVREIVGPLMLVEKVEGVKYNELVEIETGSGEIRRGQVLEVNGDKALVQLFEGSTGLNINDCKVRFVGKSIELGVSIDMLGRVFDGLGRPRDKGPMIIPEKRLDINGNPINPTARDYPSEFIQTGISAIDGLNTLVRGQKLPIFSGSGLPHAQLAAQIARQAKVLGTDSKFAVVFAAMGITFEEADYFISDFRRTGAIDRTVLFINLANDPAIERIATPRMALTCAEFLAYEKEMHVLVIMTDMTNYCEALREVSAARKEVPGRRGYPGYLYTDLATIYERAGRIKGRKGSITQIPILTMPEDDKTHPIPDLTGYITEGQIILSRDLYRKGIYPPIDVLPSLSRLKDKGIGQGKTREDHADLMNQLFASYARGKQAKELAVILGEAALSDTDKLYAKFADEFEARYVAQREDEDRSIEETLAIGWDLLTILPRAELKRVRDEYIDKYLPEKGE.

This sequence belongs to the ATPase alpha/beta chains family.

Produces ATP from ADP in the presence of a proton gradient across the membrane. The V-type beta chain is a regulatory subunit. This is V-type ATP synthase beta chain from Thermoanaerobacter sp. (strain X514).